The primary structure comprises 220 residues: Early protein OPG038 (220 aa).

Residues Met-1–Ser-17 form the signal peptide.

It belongs to the orthopoxvirus OPG038 family. As to quaternary structure, homooligomer. Interacts with host CD80 and CD86 when secreted. Glycosylated by host.

It localises to the host endoplasmic reticulum. Its subcellular location is the secreted. Plays a role in immune evasion. When secreted, inhibits T-cell activation by preventing the binding of host CD80 and CD86 to soluble CTLA4 and CD28. In the infected cell, may inhibits host NF kappa B activation. In Variola virus (isolate Human/India/Ind3/1967) (VARV), this protein is Early protein OPG038 (OPG038).